We begin with the raw amino-acid sequence, 380 residues long: Peroxisomal membrane protein PEX13 (380 aa).

Residues 1–30 (MSDSSAPDLPSKPSSLNAGQSSSLQTTNTG) form a disordered region. Topologically, residues 1-230 (MSDSSAPDLP…NKNTNKLSLK (230 aa)) are lumenal. Positions 12–30 (KPSSLNAGQSSSLQTTNTG) are enriched in polar residues. The helical transmembrane segment at 231–251 (PLLLFLAAVVGFPYLLKKLIA) threads the bilayer. Over 252 to 380 (HLAETSQMNG…DSTEFQKMKT (129 aa)) the chain is Cytoplasmic. The region spanning 277-344 (TKLEFARALY…PYNYVEIIER (68 aa)) is the SH3 domain.

Belongs to the peroxin-13 family. Interacts (via SH3 domain) with PEX14 (via SH3-binding motif); forming the PEX13-PEX14 docking complex.

The protein resides in the peroxisome membrane. In terms of biological role, component of the PEX13-PEX14 docking complex, a translocon channel that specifically mediates the import of peroxisomal cargo proteins bound to PEX5 receptor. The PEX13-PEX14 docking complex forms a large import pore which can be opened to a diameter of about 9 nm. Mechanistically, PEX5 receptor along with cargo proteins associates with the PEX14 subunit of the PEX13-PEX14 docking complex in the cytosol, leading to the insertion of the receptor into the organelle membrane with the concomitant translocation of the cargo into the peroxisome matrix. This is Peroxisomal membrane protein PEX13 (PEX13) from Komagataella pastoris (Yeast).